The following is a 545-amino-acid chain: Leucine-rich repeat LGI family member 2 (545 aa).

The signal sequence occupies residues 1 to 28; the sequence is MALRRGGCGALGLLLLLLGAACLIPRSA. The LRRNT domain occupies 29 to 65; it reads QVRRLARCPATCSCTKESIICVGSSWVPRIVPGDISS. Asn-70 is a glycosylation site (N-linked (GlcNAc...) asparagine). LRR repeat units follow at residues 86-107, 110-131, and 134-155; these read SLQLLLLNSNSFTIIRDDAFAG, HLEYLFIEGNKIETISRNAFRG, and DLTHLSLANNHIKALPRDVFSD. Residues 167-217 enclose the LRRCT domain; the sequence is NKFECDCKAKWLYLWLKMTNSTVSDVLCIGPPEYQEKKLNDVTSFDYECTT. An N-linked (GlcNAc...) asparagine glycan is attached at Asn-186. EAR repeat units lie at residues 219-261, 265-307, 311-358, 360-403, 407-450, 452-494, and 498-540; these read DFVV…EWDH, NFRS…KYDE, KFVK…KWNS, GFYS…QWNK, KFVP…RWNS, QFVE…QWDK, and LFKK…EHII. A glycan (N-linked (GlcNAc...) asparagine) is linked at Asn-271. N-linked (GlcNAc...) asparagine glycosylation is present at Asn-402.

In terms of tissue distribution, brain, heart and placenta.

It localises to the secreted. In terms of biological role, required for the development of soma-targeting inhibitory GABAergic synapses made by parvalbumin-positive basket cells. This chain is Leucine-rich repeat LGI family member 2 (LGI2), found in Homo sapiens (Human).